A 219-amino-acid chain; its full sequence is GTP cyclohydrolase-2 (219 aa).

Residue 51 to 55 (RIHSE) coordinates GTP. Zn(2+)-binding residues include Cys56, Cys67, and Cys69. GTP is bound by residues Gln72, 94–96 (EGR), and Thr116. The Proton acceptor role is filled by Asp128. Arg130 (nucleophile) is an active-site residue. GTP-binding residues include Thr151 and Lys156.

It belongs to the GTP cyclohydrolase II family. Zn(2+) serves as cofactor.

It catalyses the reaction GTP + 4 H2O = 2,5-diamino-6-hydroxy-4-(5-phosphoribosylamino)-pyrimidine + formate + 2 phosphate + 3 H(+). It functions in the pathway cofactor biosynthesis; riboflavin biosynthesis; 5-amino-6-(D-ribitylamino)uracil from GTP: step 1/4. Functionally, catalyzes the conversion of GTP to 2,5-diamino-6-ribosylamino-4(3H)-pyrimidinone 5'-phosphate (DARP), formate and pyrophosphate. This chain is GTP cyclohydrolase-2, found in Pasteurella multocida (strain Pm70).